Reading from the N-terminus, the 838-residue chain is DNA gyrase subunit A (838 aa).

The 470-residue stretch at 41–510 (LPEVRDGLKP…ADGDVSDEDL (470 aa)) folds into the Topo IIA-type catalytic domain. Residue tyrosine 129 is the O-(5'-phospho-DNA)-tyrosine intermediate of the active site. A GyrA-box motif is present at residues 537–543 (QKRGGKG).

This sequence belongs to the type II topoisomerase GyrA/ParC subunit family. As to quaternary structure, heterotetramer, composed of two GyrA and two GyrB chains. In the heterotetramer, GyrA contains the active site tyrosine that forms a transient covalent intermediate with DNA, while GyrB binds cofactors and catalyzes ATP hydrolysis. Mg(2+) serves as cofactor.

It localises to the cytoplasm. It catalyses the reaction ATP-dependent breakage, passage and rejoining of double-stranded DNA.. DNA supercoiling is inhibited by EDTA, novobiocin, coumermycin and ciprofloxacin. In terms of biological role, a type II topoisomerase that negatively supercoils closed circular double-stranded (ds) DNA in an ATP-dependent manner to modulate DNA topology and maintain chromosomes in an underwound state. Also catalyzes the interconversion of other topological isomers of double-stranded DNA rings, including catenanes and knotted rings. Relaxes negatively supercoiled DNA in an ATP-independent manner. A linear reaction intermediate can be trapped in the presence of the antibiotic ciprofloxacin. Negative supercoiling favors strand separation, and DNA replication, transcription, recombination and repair, all of which involve strand separation. Type II topoisomerases break and join 2 DNA strands simultaneously in an ATP-dependent manner. This is DNA gyrase subunit A from Mycobacterium bovis (strain BCG / Pasteur 1173P2).